The following is a 338-amino-acid chain: Glycerol-3-phosphate dehydrogenase [NAD(P)+] (338 aa).

The NADPH site is built by S14, Y15, H35, and K109. Residues K109, G138, and T140 each coordinate sn-glycerol 3-phosphate. Residue A142 participates in NADPH binding. K194, D247, S257, R258, and N259 together coordinate sn-glycerol 3-phosphate. K194 (proton acceptor) is an active-site residue. R258 lines the NADPH pocket. Residues V282 and E284 each contribute to the NADPH site.

The protein belongs to the NAD-dependent glycerol-3-phosphate dehydrogenase family.

The protein resides in the cytoplasm. It carries out the reaction sn-glycerol 3-phosphate + NAD(+) = dihydroxyacetone phosphate + NADH + H(+). It catalyses the reaction sn-glycerol 3-phosphate + NADP(+) = dihydroxyacetone phosphate + NADPH + H(+). It functions in the pathway membrane lipid metabolism; glycerophospholipid metabolism. In terms of biological role, catalyzes the reduction of the glycolytic intermediate dihydroxyacetone phosphate (DHAP) to sn-glycerol 3-phosphate (G3P), the key precursor for phospholipid synthesis. This is Glycerol-3-phosphate dehydrogenase [NAD(P)+] from Shewanella sediminis (strain HAW-EB3).